A 501-amino-acid polypeptide reads, in one-letter code: Aldehyde dehydrogenase mpl4 (501 aa).

231 to 236 (GSTASG) contributes to the NAD(+) binding site. Active-site residues include Glu253 and Cys287.

This sequence belongs to the aldehyde dehydrogenase family.

The enzyme catalyses an aldehyde + NAD(+) + H2O = a carboxylate + NADH + 2 H(+). It participates in mycotoxin biosynthesis. In terms of biological role, aldehyde dehydrogenase; part of the gene cluster that mediates the biosynthesis of the mycotoxin citrinin, a hepato-nephrotoxic compound to humans due to inhibition of respiration complex III. The pathway begins with the synthesis of a keto-aldehyde intermediate by the citrinin PKS (pksCT) from successive condensations of 4 malonyl-CoA units, presumably with a simple acetyl-CoA starter unit. Release of the keto-aldehyde intermediate is consistent with the presence of the C-terminal reductive release domain. Mp11 collaborates with pksCT by catalyzing the hydrolysis of ACP-bound acyl intermediates to free the ACP from stalled intermediates. Mpl2 then catalyzes the oxidation of the C-12 methyl of the ketone intermediate to an alcohol intermediate which is further oxidized by the oxidoreductase mpl7 to produce a bisaldehyde intermediate. The fourth catalytic step is catalyzed by the mpl4 aldehyde dehydrogenase. The final transformation is the reduction of C-3 by mpl6 to provide the chemically stable citrinin nucleus. The polypeptide is Aldehyde dehydrogenase mpl4 (Monascus purpureus (Red mold)).